A 446-amino-acid polypeptide reads, in one-letter code: Thymidine phosphorylase (446 aa).

This sequence belongs to the thymidine/pyrimidine-nucleoside phosphorylase family. Homodimer.

It catalyses the reaction thymidine + phosphate = 2-deoxy-alpha-D-ribose 1-phosphate + thymine. Its pathway is pyrimidine metabolism; dTMP biosynthesis via salvage pathway; dTMP from thymine: step 1/2. In terms of biological role, the enzymes which catalyze the reversible phosphorolysis of pyrimidine nucleosides are involved in the degradation of these compounds and in their utilization as carbon and energy sources, or in the rescue of pyrimidine bases for nucleotide synthesis. The sequence is that of Thymidine phosphorylase from Psychromonas ingrahamii (strain DSM 17664 / CCUG 51855 / 37).